The sequence spans 610 residues: Elongation factor 4 (610 aa).

The tr-type G domain maps to 11-193; that stretch reads ENIRNFSIIA…QIVEKVPAPS (183 aa). Residues 23-28 and 140-143 each bind GTP; these read DHGKST and NKID.

The protein belongs to the TRAFAC class translation factor GTPase superfamily. Classic translation factor GTPase family. LepA subfamily.

It localises to the cell membrane. It catalyses the reaction GTP + H2O = GDP + phosphate + H(+). Its function is as follows. Required for accurate and efficient protein synthesis under certain stress conditions. May act as a fidelity factor of the translation reaction, by catalyzing a one-codon backward translocation of tRNAs on improperly translocated ribosomes. Back-translocation proceeds from a post-translocation (POST) complex to a pre-translocation (PRE) complex, thus giving elongation factor G a second chance to translocate the tRNAs correctly. Binds to ribosomes in a GTP-dependent manner. This Streptococcus equi subsp. equi (strain 4047) protein is Elongation factor 4.